Reading from the N-terminus, the 106-residue chain is MYAVLKSGGRQYEVRPGQVVKVEKLLGEVGDKVTLDQVLLFSDGTDIQVGQPVLANIAVQGQIVEQGRHRKIVIFKHKRRKDYRKKQGHRQHYTAVRVEEIVTLGQ.

Belongs to the bacterial ribosomal protein bL21 family. As to quaternary structure, part of the 50S ribosomal subunit. Contacts protein L20.

Its function is as follows. This protein binds to 23S rRNA in the presence of protein L20. The protein is Large ribosomal subunit protein bL21 of Syntrophobacter fumaroxidans (strain DSM 10017 / MPOB).